We begin with the raw amino-acid sequence, 428 residues long: Enolase (428 aa).

Position 162 (glutamine 162) interacts with (2R)-2-phosphoglycerate. Glutamate 204 acts as the Proton donor in catalysis. Residues aspartate 241, glutamate 282, and aspartate 309 each coordinate Mg(2+). (2R)-2-phosphoglycerate is bound by residues lysine 334, arginine 363, serine 364, and lysine 385. Lysine 334 acts as the Proton acceptor in catalysis.

This sequence belongs to the enolase family. Mg(2+) is required as a cofactor.

It is found in the cytoplasm. It localises to the secreted. The protein localises to the cell surface. It carries out the reaction (2R)-2-phosphoglycerate = phosphoenolpyruvate + H2O. It participates in carbohydrate degradation; glycolysis; pyruvate from D-glyceraldehyde 3-phosphate: step 4/5. Its function is as follows. Catalyzes the reversible conversion of 2-phosphoglycerate (2-PG) into phosphoenolpyruvate (PEP). It is essential for the degradation of carbohydrates via glycolysis. This chain is Enolase, found in Mycobacterium marinum (strain ATCC BAA-535 / M).